The sequence spans 169 residues: ATP synthase subunit b (169 aa).

The helical transmembrane segment at 12-32 (PSVGLIFWKTVAFLIFLYILY) threads the bilayer. The interval 69 to 107 (AENEEARREAEQKAQQILREARDSAEELREEEKAKTRRE) is disordered. A compositionally biased stretch (basic and acidic residues) spans 87–107 (REARDSAEELREEEKAKTRRE).

This sequence belongs to the ATPase B chain family. In terms of assembly, F-type ATPases have 2 components, F(1) - the catalytic core - and F(0) - the membrane proton channel. F(1) has five subunits: alpha(3), beta(3), gamma(1), delta(1), epsilon(1). F(0) has three main subunits: a(1), b(2) and c(10-14). The alpha and beta chains form an alternating ring which encloses part of the gamma chain. F(1) is attached to F(0) by a central stalk formed by the gamma and epsilon chains, while a peripheral stalk is formed by the delta and b chains.

It localises to the cell inner membrane. Its function is as follows. F(1)F(0) ATP synthase produces ATP from ADP in the presence of a proton or sodium gradient. F-type ATPases consist of two structural domains, F(1) containing the extramembraneous catalytic core and F(0) containing the membrane proton channel, linked together by a central stalk and a peripheral stalk. During catalysis, ATP synthesis in the catalytic domain of F(1) is coupled via a rotary mechanism of the central stalk subunits to proton translocation. Component of the F(0) channel, it forms part of the peripheral stalk, linking F(1) to F(0). The sequence is that of ATP synthase subunit b from Salinibacter ruber (strain DSM 13855 / M31).